The sequence spans 308 residues: UDP-N-acetylenolpyruvoylglucosamine reductase (308 aa).

The region spanning 32 to 196 (VGGPAARLYK…ISAKLQLSPG (165 aa)) is the FAD-binding PCMH-type domain. The active site involves arginine 176. Serine 225 acts as the Proton donor in catalysis. The active site involves glutamate 296.

The protein belongs to the MurB family. FAD serves as cofactor.

The protein resides in the cytoplasm. The catalysed reaction is UDP-N-acetyl-alpha-D-muramate + NADP(+) = UDP-N-acetyl-3-O-(1-carboxyvinyl)-alpha-D-glucosamine + NADPH + H(+). Its pathway is cell wall biogenesis; peptidoglycan biosynthesis. Cell wall formation. The protein is UDP-N-acetylenolpyruvoylglucosamine reductase of Legionella pneumophila (strain Lens).